The sequence spans 66 residues: Metallothionein (66 aa).

S1 is modified (N-acetylserine). 18 residues coordinate Cd(2+): C9, C13, C18, C20, C24, C26, C30, C32, C35, C38, C40, C45, C47, C51, C57, C59, C63, and C65.

It belongs to the metallothionein superfamily. Type 2 family.

Functionally, the metallothioneins are involved in the cellular sequestration of toxic metal ions and regulation of essential trace elements. The protein is Metallothionein of Arianta arbustorum (Land snail).